The sequence spans 143 residues: Transcriptional regulator MraZ (143 aa).

SpoVT-AbrB domains are found at residues 5–47 (EYRH…PQSE) and 76–119 (ASEC…SKTL).

Belongs to the MraZ family. Forms oligomers.

The protein resides in the cytoplasm. Its subcellular location is the nucleoid. The sequence is that of Transcriptional regulator MraZ from Shouchella clausii (strain KSM-K16) (Alkalihalobacillus clausii).